The primary structure comprises 456 residues: Phospholipase A1 member A (456 aa).

A signal peptide spans 1–25 (MPPDFWERCFWLWGLLLWLSVGSTG). N-linked (GlcNAc...) asparagine glycosylation occurs at N34. S166 functions as the Nucleophile in the catalytic mechanism. The active-site Charge relay system is the D190. C245 and C258 are joined by a disulfide. Catalysis depends on H260, which acts as the Charge relay system. 2 cysteine pairs are disulfide-bonded: C282-C293 and C296-C304.

The protein belongs to the AB hydrolase superfamily. Lipase family.

It is found in the secreted. The enzyme catalyses a 1,2-diacyl-sn-glycero-3-phospho-L-serine + H2O = a 2-acyl-sn-glycero-3-phospho-L-serine + a fatty acid + H(+). It catalyses the reaction 1,2-di-(9Z)-octadecenoyl-sn-glycero-3-phospho-L-serine + H2O = 2-(9Z-octadecenoyl)-sn-glycero-3-phospho-L-serine + (9Z)-octadecenoate + H(+). The catalysed reaction is 1-hexadecanoyl-2-(5Z,8Z,11Z,14Z-eicosatetraenoyl)-sn-glycero-3-phospho-L-serine + H2O = 2-(5Z,8Z,11Z,14Z)-eicosatetraenoyl-sn-glycero-3-phospho-L-serine + hexadecanoate + H(+). It carries out the reaction a 1-acyl-sn-glycero-3-phospho-L-serine + H2O = sn-glycero-3-phospho-L-serine + a fatty acid + H(+). The enzyme catalyses 1-(9Z-octadecenoyl)-sn-glycero-3-phospho-L-serine + H2O = sn-glycero-3-phospho-L-serine + (9Z)-octadecenoate + H(+). Its function is as follows. Hydrolyzes the ester bond of the acyl group attached at the sn-1 position of phosphatidylserines (phospholipase A1 activity) and 1-acyl-2-lysophosphatidylserines (lysophospholipase activity) in the pathway of phosphatidylserines acyl chain remodeling. Cleaves phosphatidylserines exposed on the outer leaflet of the plasma membrane of apoptotic cells producing 2-acyl-1-lysophosphatidylserines, which in turn enhance mast cell activation and histamine production. Has no activity toward other glycerophospholipids including phosphatidylcholines, phosphatidylethanolamines, phosphatidic acids or phosphatidylinositols, or glycerolipids such as triolein. The sequence is that of Phospholipase A1 member A (PLA1A) from Bos taurus (Bovine).